The chain runs to 543 residues: Small conductance calcium-activated potassium channel protein 1 (543 aa).

The interval 1–92 is disordered; sequence MNSHSYNGSV…SGKPSNVGHR (92 aa). Acidic residues predominate over residues 65–76; it reads DQDDDEDDEEDE. Residues 111–131 traverse the membrane as a helical segment; that stretch reads LIFGMFGIVVMVTETELSWGV. The chain crosses the membrane as a helical span at residues 140–160; the sequence is FALKCLISLSTAILLGLVVLY. Residues 179–199 traverse the membrane as a helical segment; sequence IAMTCERVFLISLELAVCAIH. A helical transmembrane segment spans residues 228-248; the sequence is VLLSIPMFLRLYLLGRVMLLH. The chain crosses the membrane as a helical span at residues 277–297; the sequence is LMTICPGTVLLVFSISSWIIA. Residues 317–337 constitute an intramembrane region (pore-forming); it reads FLGAMWLISITFLSIGYGDMV. Residues 346 to 366 form a helical membrane-spanning segment; sequence VCLLTGIMGAGCTALVVAVVA. A calmodulin-binding region spans residues 384–463; that stretch reads DTQLTKRVKN…LTDLAKTQTV (80 aa). A disordered region spans residues 505-543; it reads QAIRPPPPPLPPRPGPGPQDQAARSSPCRWTPVAPSDCG. A compositionally biased stretch (pro residues) spans 508–521; sequence RPPPPPLPPRPGPG.

This sequence belongs to the potassium channel KCNN family. KCa2.1/KCNN1 subfamily. In terms of assembly, homodimer. Heteromultimer with KCNN2 and KCNN3. The complex is composed of 4 channel subunits each of which binds to a calmodulin subunit which regulates the channel activity through calcium-binding. Interacts with calmodulin.

It is found in the membrane. The protein localises to the cytoplasm. It localises to the myofibril. The protein resides in the sarcomere. Its subcellular location is the z line. The enzyme catalyses K(+)(in) = K(+)(out). With respect to regulation, inhibited by bee venom neurotoxin apamin. Inhibited by d-tubocurarine and tetraethylammonium (TEA). Small conductance calcium-activated potassium channel that mediates the voltage-independent transmembrane transfer of potassium across the cell membrane through a constitutive interaction with calmodulin which binds the intracellular calcium allowing its opening. The current is characterized by a voltage-independent activation, an intracellular calcium concentration increase-dependent activation and a single-channel conductance of about 3 picosiemens. Also presents an inwardly rectifying current, thus reducing its already small outward conductance of potassium ions, which is particularly the case when the membrane potential displays positive values, above + 20 mV. Activation is followed by membrane hyperpolarization. Thought to regulate neuronal excitability by contributing to the slow component of synaptic afterhyperpolarization. This chain is Small conductance calcium-activated potassium channel protein 1, found in Homo sapiens (Human).